The sequence spans 630 residues: A-type voltage-gated potassium channel KCND2 (630 aa).

The Cytoplasmic segment spans residues 1-184 (MAAGVAAWLP…FENPHTSTMA (184 aa)). The interval 2–20 (AAGVAAWLPFARAAAIGWM) is interaction with KCNIP1, KCNIP2, and other family members. Residue Thr-38 is modified to Phosphothreonine. The interval 71 to 90 (ERDFFYHPETQQYFFDRDPD) is interaction with KCNIP1. Zn(2+) is bound by residues His-105, Cys-111, Cys-132, and Cys-133. The helical transmembrane segment at 185–206 (LVFYYVTGFFIAVSVIANVVET) threads the bilayer. Topologically, residues 207–226 (VPCGSSPGHIKELPCGERYA) are extracellular. A helical membrane pass occupies residues 227-249 (VAFFCLDTACVMIFTVEYLLRLA). Residues 250–256 (AAPSRYR) are Cytoplasmic-facing. A helical membrane pass occupies residues 257–281 (FVRSVMSIIDVVAILPYYIGLVMTD). At 282–287 (NEDVSG) the chain is on the extracellular side. The chain crosses the membrane as a helical; Voltage-sensor span at residues 288–307 (AFVTLRVFRVFRIFKFSRHS). Residues 308 to 321 (QGLRILGYTLKSCA) are Cytoplasmic-facing. Positions 308 to 321 (QGLRILGYTLKSCA) are S4-S5 linker. A helical transmembrane segment spans residues 322–345 (SELGFLLFSLTMAIIIFATVMFYA). The Extracellular portion of the chain corresponds to 346–357 (EKGSSASKFTSI). The helical intramembrane region spans 358-369 (PAAFWYTIVTMT). Residues Thr-370, Leu-371, Gly-372, and Tyr-373 each coordinate K(+). The short motif at 370–375 (TLGYGD) is the Selectivity filter element. An intramembrane segment occupies 370–377 (TLGYGDMV). Residues 378–380 (PKT) are Extracellular-facing. Residues 381 to 403 (IAGKIFGSICSLSGVLVIALPVP) form a helical membrane-spanning segment. The Cytoplasmic portion of the chain corresponds to 404-630 (VIVSNFSRIY…GGNIVRVSAL (227 aa)). Phosphoserine is present on Ser-438. The interval 474-489 (FETQHHHLLHCLEKTT) is required for dendritic targeting. The interval 474-630 (FETQHHHLLH…GGNIVRVSAL (157 aa)) is important for normal channel activation and inactivation, for interaction with KCNIP2, and probably other family members as well. 4 positions are modified to phosphoserine: Ser-548, Ser-552, Ser-572, and Ser-575. The disordered stretch occupies residues 600–630 (IPTPPVTTPEGDDRPESPEYSGGNIVRVSAL). Phosphothreonine occurs at positions 602 and 607. Ser-616 carries the phosphoserine modification. Positions 627 to 630 (VSAL) match the PDZ-binding motif.

This sequence belongs to the potassium channel family. D (Shal) (TC 1.A.1.2) subfamily. Kv4.2/KCND2 sub-subfamily. In terms of assembly, homotetramer or heterotetramer with KCND1 or KCND3. Associates with the regulatory subunits KCNIP2, KCNIP3 and KCNIP4. Interacts with the regulatory subunit KCNIP1; this interaction mediates the capture of both the N- and C-terminus of KCND2, preventing N-type inactivation and stabilizing the S6 conformation, thereby accelerating closed state inactivation and recovery. In vivo, probably exists as heteromeric complex containing variable proportions of KCND1, KCND2, KCND3, KCNIP1, KCNIP2, KCNIP3, KCNIP4, DPP6 and DPP10. The tetrameric channel can associate with up to four regulatory subunits, such as KCNIP2 or KCNIP4. Interaction with four KCNIP4 chains does not reduce interaction with DPP10. Interacts with DLG4 and NCS1/FREQ. Interacts with DLG1. Probably part of a complex consisting of KCNIP1, KCNIP2 isoform 3 and KCND2. Interacts with FLNA, FLNC and DPP10. Interacts (via S1 and S2 helices) with DPP6; this interaction stabilizes the conformation of the S1-S2 helices and facilitates S4 conformational change, including S4 sliding up and down, thereby accelerating activation, inactivation, and recovery. In terms of processing, phosphorylation at Ser-438 in response to MAPK activation is increased in stimulated dendrites. Interaction with KCNIP2 and DPP6 propomtes phosphorylation by PKA at Ser-552. Phosphorylation at Ser-552 has no effect on interaction with KCNIP3, but is required for the regulation of channel activity by KCNIP3. Phosphorylation at Ser-552 leads to KCND2 internalization. Phosphorylated by MAPK in response to signaling via the metabotropic glutamate receptor GRM5. Phosphorylation at Ser-616 is required for the down-regulation of neuronal A-type currents in response to signaling via GRM5. Detected in ovary, in corpus luteum and in granulosa and theca cells in the follicle (at protein level). Highly expressed throughout the brain. Detected in amygdala, caudate nucleus, cerebellum, hippocampus, substantia nigra and thalamus. Expression is not detectable or very low in heart, kidney, liver, lung, pancreas and skeletal muscle. Not detectable in human heart atrium.

The protein localises to the cell membrane. Its subcellular location is the cell projection. The protein resides in the dendrite. It localises to the synapse. It is found in the perikaryon. The protein localises to the postsynaptic cell membrane. Its subcellular location is the dendritic spine. The protein resides in the cell junction. It catalyses the reaction K(+)(in) = K(+)(out). Voltage-gated potassium channel that mediates transmembrane potassium transport in excitable membranes, primarily in the brain. Mediates the major part of the dendritic A-type current I(SA) in brain neurons. This current is activated at membrane potentials that are below the threshold for action potentials. It regulates neuronal excitability, prolongs the latency before the first spike in a series of action potentials, regulates the frequency of repetitive action potential firing, shortens the duration of action potentials and regulates the back-propagation of action potentials from the neuronal cell body to the dendrites. Contributes to the regulation of the circadian rhythm of action potential firing in suprachiasmatic nucleus neurons, which regulates the circadian rhythm of locomotor activity. Functions downstream of the metabotropic glutamate receptor GRM5 and plays a role in neuronal excitability and in nociception mediated by activation of GRM5. Mediates the transient outward current I(to) in rodent heart left ventricle apex cells, but not in human heart, where this current is mediated by another family member. Forms tetrameric potassium-selective channels through which potassium ions pass in accordance with their electrochemical gradient. The channel alternates between opened and closed conformations in response to the voltage difference across the membrane. Can form functional homotetrameric channels and heterotetrameric channels that contain variable proportions of KCND2 and KCND3; channel properties depend on the type of pore-forming alpha subunits that are part of the channel. In vivo, membranes probably contain a mixture of heteromeric potassium channel complexes. Interaction with specific isoforms of the regulatory subunits KCNIP1, KCNIP2, KCNIP3 or KCNIP4 strongly increases expression at the cell surface and thereby increases channel activity; it modulates the kinetics of channel activation and inactivation, shifts the threshold for channel activation to more negative voltage values, shifts the threshold for inactivation to less negative voltages and accelerates recovery after inactivation. Likewise, interaction with DPP6 or DPP10 promotes expression at the cell membrane and regulates both channel characteristics and activity. Upon depolarization, the channel goes from a resting closed state (C state) to an activated but non-conducting state (C* state), from there, the channel may either inactivate (I state) or open (O state). This chain is A-type voltage-gated potassium channel KCND2, found in Homo sapiens (Human).